Here is a 144-residue protein sequence, read N- to C-terminus: High mobility group B protein 2 (144 aa).

Composition is skewed to basic and acidic residues over residues 1–12 and 73–94; these read MKGAKSKTETRS and AGDK…KAEK. Disordered regions lie at residues 1-42, 57-94, and 106-144; these read MKGA…KRPA, KKEN…KAEK, and YNKK…EDDD. The segment at residues 38–107 is a DNA-binding region (HMG box); the sequence is PKRPASAFFV…EYEKNIKAYN (70 aa). S125 bears the Phosphoserine mark. Over residues 127-144 the composition is skewed to acidic residues; it reads VNDEDDAEDGSEEEEDDD.

This sequence belongs to the HMGB family. Mostly expressed in cotyledons, hypocotyls, leaves, and flowers (excluding pedicels), also present in roots and stems.

It localises to the nucleus. It is found in the cytoplasm. Its subcellular location is the cytosol. Binds preferentially double-stranded DNA. Confers sensitivity to salt and drought stresses. The chain is High mobility group B protein 2 (HMGB2) from Arabidopsis thaliana (Mouse-ear cress).